Here is a 158-residue protein sequence, read N- to C-terminus: Transcription elongation factor GreA (158 aa).

Residues 5–75 are a coiled coil; the sequence is EKLPMLAEGY…DLEDRVSRAQ (71 aa).

This sequence belongs to the GreA/GreB family.

In terms of biological role, necessary for efficient RNA polymerase transcription elongation past template-encoded arresting sites. The arresting sites in DNA have the property of trapping a certain fraction of elongating RNA polymerases that pass through, resulting in locked ternary complexes. Cleavage of the nascent transcript by cleavage factors such as GreA or GreB allows the resumption of elongation from the new 3'terminus. GreA releases sequences of 2 to 3 nucleotides. This chain is Transcription elongation factor GreA, found in Novosphingobium aromaticivorans (strain ATCC 700278 / DSM 12444 / CCUG 56034 / CIP 105152 / NBRC 16084 / F199).